The primary structure comprises 424 residues: UDP-N-acetylglucosamine 1-carboxyvinyltransferase (424 aa).

Phosphoenolpyruvate is bound at residue Lys22–Asn23. UDP-N-acetyl-alpha-D-glucosamine is bound at residue Arg98. Catalysis depends on Cys122, which acts as the Proton donor. Residue Cys122 is modified to 2-(S-cysteinyl)pyruvic acid O-phosphothioketal. UDP-N-acetyl-alpha-D-glucosamine-binding positions include Arg127–Gln131, Asp312, and Ile334.

It belongs to the EPSP synthase family. MurA subfamily.

It is found in the cytoplasm. It catalyses the reaction phosphoenolpyruvate + UDP-N-acetyl-alpha-D-glucosamine = UDP-N-acetyl-3-O-(1-carboxyvinyl)-alpha-D-glucosamine + phosphate. The protein operates within cell wall biogenesis; peptidoglycan biosynthesis. Functionally, cell wall formation. Adds enolpyruvyl to UDP-N-acetylglucosamine. The sequence is that of UDP-N-acetylglucosamine 1-carboxyvinyltransferase from Xanthomonas axonopodis pv. citri (strain 306).